The sequence spans 500 residues: NAD(P)H-quinone oxidoreductase chain 4, chloroplastic (500 aa).

The next 14 membrane-spanning stretches (helical) occupy residues 4-24 (FPWLTIIVVFPISAGSLMLFL), 35-55 (YTICICILELLITTYAFCYNF), 87-107 (IGTILLTGFITTLATLAAFPV), 113-130 (LFHFLMLAMYSGQIGSFS), 134-154 (LLLFFIMWELELIPVYLLLSM), 167-187 (FILYTAGSSIFLLIGVLGISL), 211-231 (ILFYIGFVIALTVKSPIIPLH), 242-262 (HYSTCMLLAGILLKMGAYGLV), 272-292 (AHSLFSPWLMAVGTIQIIYAA), 305-325 (IAYSSVSHMGFIIIGIGSITD), 330-350 (GAILQIISHGFIGAALFFLAG), 386-406 (LALPGMSGFVAELIVFFGIIT), 416-436 (ILIIFVMAIGIILTPIYLLSM), and 462-482 (LFLSISILLPIIGIGIYPDFV).

This sequence belongs to the complex I subunit 4 family.

The protein resides in the plastid. It localises to the chloroplast thylakoid membrane. The enzyme catalyses a plastoquinone + NADH + (n+1) H(+)(in) = a plastoquinol + NAD(+) + n H(+)(out). The catalysed reaction is a plastoquinone + NADPH + (n+1) H(+)(in) = a plastoquinol + NADP(+) + n H(+)(out). This Draba nemorosa (Woodland whitlowgrass) protein is NAD(P)H-quinone oxidoreductase chain 4, chloroplastic.